We begin with the raw amino-acid sequence, 290 residues long: Arylamine N-acetyltransferase, pineal gland isozyme NAT-10 (290 aa).

The Acyl-thioester intermediate role is filled by Cys68. Active-site residues include His107 and Asp122.

Belongs to the arylamine N-acetyltransferase family.

It catalyses the reaction an arylamine + acetyl-CoA = an N-acetylarylamine + CoA. This Gallus gallus (Chicken) protein is Arylamine N-acetyltransferase, pineal gland isozyme NAT-10.